A 284-amino-acid polypeptide reads, in one-letter code: 2-dehydro-3-deoxyphosphooctonate aldolase (284 aa).

Belongs to the KdsA family.

It localises to the cytoplasm. It catalyses the reaction D-arabinose 5-phosphate + phosphoenolpyruvate + H2O = 3-deoxy-alpha-D-manno-2-octulosonate-8-phosphate + phosphate. Its pathway is carbohydrate biosynthesis; 3-deoxy-D-manno-octulosonate biosynthesis; 3-deoxy-D-manno-octulosonate from D-ribulose 5-phosphate: step 2/3. It participates in bacterial outer membrane biogenesis; lipopolysaccharide biosynthesis. The protein is 2-dehydro-3-deoxyphosphooctonate aldolase of Synechococcus sp. (strain ATCC 27144 / PCC 6301 / SAUG 1402/1) (Anacystis nidulans).